The following is a 103-amino-acid chain: Matrix Gla protein (103 aa).

The first 19 residues, 1-19, serve as a signal peptide directing secretion; that stretch reads MRSLLLLTVLAALVVAILC. 4-carboxyglutamate is present on E21. A phosphoserine mark is found at S22, S25, and S28. The Gla domain occupies 51–97; it reads MAKAQERVREQRKPAYELNREACDDYKLCERYAMVYGYNAAYNRYFR. 4-carboxyglutamate is present on residues E56, E60, E67, and E71. Cysteines 73 and 79 form a disulfide.

It belongs to the osteocalcin/matrix Gla protein family. In terms of processing, requires vitamin K-dependent gamma-carboxylation for its function.

It is found in the secreted. Functionally, associates with the organic matrix of bone and cartilage. Thought to act as an inhibitor of bone formation. This is Matrix Gla protein (MGP) from Oryctolagus cuniculus (Rabbit).